The following is a 172-amino-acid chain: RNA silencing suppressor p19 (172 aa).

Residues 1–20 show a composition bias toward basic and acidic residues; the sequence is MERAIQGNDTREQANGERWD. The segment at 1–27 is disordered; sequence MERAIQGNDTREQANGERWDGGSGGIT.

The protein belongs to the tombusvirus protein p19 family. As to quaternary structure, homodimer.

In terms of biological role, acts as a suppressor of RNA-mediated gene silencing, also known as post-transcriptional gene silencing (PTGS), a mechanism of plant viral defense that limits the accumulation of viral RNAs. Binds to short interfering RNAs (siRNAs) with high affinity. Acts as a molecular caliper to specifically select siRNAs based on the length of the duplex region of the RNA. This chain is RNA silencing suppressor p19, found in Dianthus caryophyllus (Carnation).